Reading from the N-terminus, the 587-residue chain is Aspartate--tRNA ligase (587 aa).

Glutamate 174 serves as a coordination point for L-aspartate. Residues 198–201 (QITK) are aspartate. Arginine 220 lines the L-aspartate pocket. ATP is bound by residues 220-222 (RDE) and glutamine 229. L-aspartate is bound at residue histidine 443. Glutamate 477 is a binding site for ATP. Position 484 (arginine 484) interacts with L-aspartate. ATP is bound at residue 529–532 (GLDR).

The protein belongs to the class-II aminoacyl-tRNA synthetase family. Type 1 subfamily. Homodimer.

It is found in the cytoplasm. The catalysed reaction is tRNA(Asp) + L-aspartate + ATP = L-aspartyl-tRNA(Asp) + AMP + diphosphate. Catalyzes the attachment of L-aspartate to tRNA(Asp) in a two-step reaction: L-aspartate is first activated by ATP to form Asp-AMP and then transferred to the acceptor end of tRNA(Asp). The sequence is that of Aspartate--tRNA ligase from Streptococcus pneumoniae (strain 70585).